We begin with the raw amino-acid sequence, 162 residues long: Ribonuclease H (162 aa).

In terms of domain architecture, RNase H type-1 spans 6–154 (DMKRVEIFTD…ADRLANQGVE (149 aa)). Positions 15, 53, 82, and 146 each coordinate Mg(2+).

The protein belongs to the RNase H family. As to quaternary structure, monomer. The cofactor is Mg(2+).

It localises to the cytoplasm. The catalysed reaction is Endonucleolytic cleavage to 5'-phosphomonoester.. Its function is as follows. Endonuclease that specifically degrades the RNA of RNA-DNA hybrids. This Nitrosomonas eutropha (strain DSM 101675 / C91 / Nm57) protein is Ribonuclease H.